A 191-amino-acid chain; its full sequence is uncharacterized protein (191 aa).

Residues 1–22 form the signal peptide; the sequence is MKSLRLMLCAMPLMLTGCSTMS.

This is an uncharacterized protein from Escherichia coli (strain K12).